Reading from the N-terminus, the 658-residue chain is Carnitine O-palmitoyltransferase 2, mitochondrial (658 aa).

The transit peptide at Met-1 to Leu-25 directs the protein to the mitochondrion. Over Ser-26–Leu-178 the chain is Mitochondrial matrix. Position 69 is an N6-succinyllysine (Lys-69). An N6-acetyllysine modification is found at Lys-79. An N6-succinyllysine modification is found at Lys-85. Positions Asn-179–Asn-208 form an intramembrane region, note=Mitochondrial inner membrane. Topologically, residues Ala-209–Ser-658 are mitochondrial matrix. An N6-acetyllysine; alternate modification is found at Lys-239. Lys-239 carries the N6-succinyllysine; alternate modification. Lys-305 is modified (N6-acetyllysine). Catalysis depends on His-372, which acts as the Proton acceptor. Lys-424 and Lys-439 each carry N6-succinyllysine. Gly-452–Asp-464 lines the CoA pocket. The (R)-carnitine site is built by Tyr-486, Ser-488, and Thr-499. An N6-acetyllysine; alternate mark is found at Lys-510 and Lys-544. Residues Lys-510 and Lys-544 each carry the N6-succinyllysine; alternate modification.

It belongs to the carnitine/choline acetyltransferase family.

The protein resides in the mitochondrion inner membrane. It catalyses the reaction (R)-carnitine + hexadecanoyl-CoA = O-hexadecanoyl-(R)-carnitine + CoA. The enzyme catalyses octanoyl-CoA + (R)-carnitine = O-octanoyl-(R)-carnitine + CoA. It carries out the reaction decanoyl-CoA + (R)-carnitine = O-decanoyl-(R)-carnitine + CoA. The catalysed reaction is dodecanoyl-CoA + (R)-carnitine = O-dodecanoyl-R-carnitine + CoA. It catalyses the reaction tetradecanoyl-CoA + (R)-carnitine = O-tetradecanoyl-(R)-carnitine + CoA. The enzyme catalyses (R)-carnitine + octadecanoyl-CoA = O-octadecanoyl-(R)-carnitine + CoA. It carries out the reaction eicosanoyl-CoA + (R)-carnitine = O-eicosanoyl-(R)-carnitine + CoA. The catalysed reaction is (9Z)-tetradecenoyl-CoA + (R)-carnitine = O-(9Z)-tetradecenoyl-(R)-carnitine + CoA. It catalyses the reaction (5Z)-tetradecenoyl-CoA + (R)-carnitine = O-(5Z)-tetradecenoyl-(R)-carnitine + CoA. The enzyme catalyses (R)-carnitine + (9Z)-octadecenoyl-CoA = O-(9Z)-octadecenoyl-(R)-carnitine + CoA. It carries out the reaction 4,8-dimethylnonanoyl-CoA + (R)-carnitine = O-4,8-dimethylnonanoyl-(R)-carnitine + CoA. It functions in the pathway lipid metabolism; fatty acid beta-oxidation. Its activity is regulated as follows. Inhibited by trans-2-hexadecanoyl-CoA. Functionally, involved in the intramitochondrial synthesis of acylcarnitines from accumulated acyl-CoA metabolites. Reconverts acylcarnitines back into the respective acyl-CoA esters that can then undergo beta-oxidation, an essential step for the mitochondrial uptake of long-chain fatty acids and their subsequent beta-oxidation in the mitochondrion. Active with medium (C8-C12) and long-chain (C14-C18) acyl-CoA esters. The polypeptide is Carnitine O-palmitoyltransferase 2, mitochondrial (Homo sapiens (Human)).